Consider the following 803-residue polypeptide: Ras GTPase-activating protein 4 (803 aa).

2 consecutive C2 domains span residues 1-105 (MAKR…SGWA) and 116-232 (VQGE…EGWF). Asp-21, Asp-27, Asp-74, Asp-76, Ser-79, Asp-82, Asp-149, Asp-155, Asp-202, Asp-204, Ser-207, and Asp-210 together coordinate Ca(2+). One can recognise a Ras-GAP domain in the interval 318 to 546 (GLAKDFLDLL…AQLKDFITKL (229 aa)). The PH domain maps to 566 to 673 (PPVKEGPLFI…WLSALRKVSI (108 aa)). The Btk-type zinc-finger motif lies at 675–711 (NTGLLGSYHPGVFRGDKWSCCHQKEKTGQGCDKTRSR). Zn(2+)-binding residues include His-683, Cys-694, Cys-695, and Cys-705. The disordered stretch occupies residues 781 to 803 (EAHSSSPAGSPPSEPNCLLELQT).

Ca(2+) is required as a cofactor. As to expression, widely expressed.

The protein resides in the cytoplasm. It is found in the cytosol. It localises to the cell membrane. Functionally, ca(2+)-dependent Ras GTPase-activating protein, that switches off the Ras-MAPK pathway following a stimulus that elevates intracellular calcium. Functions as an adaptor for Cdc42 and Rac1 during FcR-mediated phagocytosis. In Homo sapiens (Human), this protein is Ras GTPase-activating protein 4 (RASA4).